The sequence spans 340 residues: Anthranilate phosphoribosyltransferase (340 aa).

5-phospho-alpha-D-ribose 1-diphosphate is bound by residues glycine 84, 87–88, threonine 92, 94–97, 112–120, and serine 124; these read GD, NIST, and KHGSRSVSS. An anthranilate-binding site is contributed by glycine 84. Serine 96 lines the Mg(2+) pocket. Residue arginine 170 participates in anthranilate binding. Residues aspartate 228 and glutamate 229 each contribute to the Mg(2+) site.

It belongs to the anthranilate phosphoribosyltransferase family. In terms of assembly, homodimer. It depends on Mg(2+) as a cofactor.

The enzyme catalyses N-(5-phospho-beta-D-ribosyl)anthranilate + diphosphate = 5-phospho-alpha-D-ribose 1-diphosphate + anthranilate. It functions in the pathway amino-acid biosynthesis; L-tryptophan biosynthesis; L-tryptophan from chorismate: step 2/5. In terms of biological role, catalyzes the transfer of the phosphoribosyl group of 5-phosphorylribose-1-pyrophosphate (PRPP) to anthranilate to yield N-(5'-phosphoribosyl)-anthranilate (PRA). This chain is Anthranilate phosphoribosyltransferase, found in Psychromonas ingrahamii (strain DSM 17664 / CCUG 51855 / 37).